The following is a 354-amino-acid chain: NADH-quinone oxidoreductase subunit H (354 aa).

8 helical membrane-spanning segments follow: residues 25–45 (LVRI…LILW), 91–111 (WIYL…WAVI), 126–146 (LLYA…AGWA), 170–190 (MGFA…SGIV), 205–225 (FLSW…ISGI), 267–287 (IVIS…PFGF), 290–310 (FVPG…VFIW), and 330–350 (IFIP…MSPL).

The protein belongs to the complex I subunit 1 family. In terms of assembly, NDH-1 is composed of 14 different subunits. Subunits NuoA, H, J, K, L, M, N constitute the membrane sector of the complex.

It is found in the cell inner membrane. It carries out the reaction a quinone + NADH + 5 H(+)(in) = a quinol + NAD(+) + 4 H(+)(out). In terms of biological role, NDH-1 shuttles electrons from NADH, via FMN and iron-sulfur (Fe-S) centers, to quinones in the respiratory chain. The immediate electron acceptor for the enzyme in this species is believed to be ubiquinone. Couples the redox reaction to proton translocation (for every two electrons transferred, four hydrogen ions are translocated across the cytoplasmic membrane), and thus conserves the redox energy in a proton gradient. This subunit may bind ubiquinone. The sequence is that of NADH-quinone oxidoreductase subunit H from Paraburkholderia phytofirmans (strain DSM 17436 / LMG 22146 / PsJN) (Burkholderia phytofirmans).